A 357-amino-acid polypeptide reads, in one-letter code: UDP-3-O-acylglucosamine N-acyltransferase (357 aa).

Catalysis depends on His-258, which acts as the Proton acceptor.

Belongs to the transferase hexapeptide repeat family. LpxD subfamily. In terms of assembly, homotrimer.

The catalysed reaction is a UDP-3-O-[(3R)-3-hydroxyacyl]-alpha-D-glucosamine + a (3R)-hydroxyacyl-[ACP] = a UDP-2-N,3-O-bis[(3R)-3-hydroxyacyl]-alpha-D-glucosamine + holo-[ACP] + H(+). The protein operates within bacterial outer membrane biogenesis; LPS lipid A biosynthesis. Functionally, catalyzes the N-acylation of UDP-3-O-acylglucosamine using 3-hydroxyacyl-ACP as the acyl donor. Is involved in the biosynthesis of lipid A, a phosphorylated glycolipid that anchors the lipopolysaccharide to the outer membrane of the cell. The chain is UDP-3-O-acylglucosamine N-acyltransferase from Azorhizobium caulinodans (strain ATCC 43989 / DSM 5975 / JCM 20966 / LMG 6465 / NBRC 14845 / NCIMB 13405 / ORS 571).